Consider the following 569-residue polypeptide: Urease subunit alpha (569 aa).

Ni(2+) contacts are provided by histidine 136, histidine 138, and lysine 219. N6-carboxylysine is present on lysine 219. Histidine 221 is a binding site for substrate. Positions 248 and 274 each coordinate Ni(2+). The active-site Proton donor is the histidine 322. Residue aspartate 362 participates in Ni(2+) binding.

It belongs to the metallo-dependent hydrolases superfamily. Urease alpha subunit family. Heterotrimer of UreA (gamma), UreB (beta) and UreC (alpha) subunits. Three heterotrimers associate to form the active enzyme. Requires Ni cation as cofactor. Post-translationally, carboxylation allows a single lysine to coordinate two nickel ions.

The protein localises to the cytoplasm. It catalyses the reaction urea + 2 H2O + H(+) = hydrogencarbonate + 2 NH4(+). Its pathway is nitrogen metabolism; urea degradation; CO(2) and NH(3) from urea (urease route): step 1/1. In Microcystis aeruginosa (strain NIES-843 / IAM M-2473), this protein is Urease subunit alpha.